The chain runs to 183 residues: uncharacterized protein (183 aa).

The protein to M.leprae ML2442.

This is an uncharacterized protein from Mycobacterium tuberculosis (strain CDC 1551 / Oshkosh).